We begin with the raw amino-acid sequence, 419 residues long: L-rhamnose isomerase (419 aa).

The Mn(2+) site is built by histidine 262, aspartate 294, and aspartate 296.

This sequence belongs to the rhamnose isomerase family. Homotetramer. Requires Mn(2+) as cofactor.

The protein localises to the cytoplasm. It carries out the reaction L-rhamnopyranose = L-rhamnulose. Its pathway is carbohydrate degradation; L-rhamnose degradation; glycerone phosphate from L-rhamnose: step 1/3. Functionally, catalyzes the interconversion of L-rhamnose and L-rhamnulose. The protein is L-rhamnose isomerase of Escherichia coli O157:H7.